Here is an 897-residue protein sequence, read N- to C-terminus: Cytokine receptor common subunit beta (897 aa).

The signal sequence occupies residues 1–16 (MVLAQGLLSMALLALC). The Extracellular portion of the chain corresponds to 17-443 (WERSLAGAEE…WDTESVLPMW (427 aa)). An intrachain disulfide couples Cys35 to Cys45. Residue Asn58 is glycosylated (N-linked (GlcNAc...) asparagine). Intrachain disulfides connect Cys75-Cys96 and Cys86-Cys91. One can recognise a Fibronectin type-III 1 domain in the interval 133–240 (PPEPRDLQIS…PEVCWDSQPG (108 aa)). The N-linked (GlcNAc...) asparagine glycan is linked to Asn191. Cystine bridges form between Cys250/Cys260 and Cys289/Cys306. Residues 339–436 (QMAPPSLNVT…EWSEARSWDT (98 aa)) enclose the Fibronectin type-III 2 domain. The N-linked (GlcNAc...) asparagine glycan is linked to Asn346. The short motif at 425–429 (WSEWS) is the WSXWS motif element. The helical transmembrane segment at 444 to 460 (VLALIVIFLTIAVLLAL) threads the bilayer. Residues 461 to 897 (RFCGIYGYRL…WEVNKPGEVC (437 aa)) are Cytoplasmic-facing. The Box 1 motif motif lies at 474–482 (WEEKIPNPS). 4 disordered regions span residues 498–517 (GSMS…WGSR), 532–630 (SEVS…EYLC), 648–812 (PGQA…QPEG), and 830–849 (PGPL…PEIK). Over residues 564–574 (EQPPSPQPGPP) the composition is skewed to pro residues. Residues 723–752 (SGASSVSLVPSLGLPSDQTPSLCPGLASGP) are compositionally biased toward low complexity. Tyr766 carries the post-translational modification Phosphotyrosine. The segment covering 830 to 840 (PGPLSLRSKPS) has biased composition (low complexity).

Belongs to the type I cytokine receptor family. Type 4 subfamily. In terms of assembly, heterodimer of an alpha and a beta subunit. The beta subunit is common to the IL3, IL5 and GM-CSF receptors. The signaling GM-CSF receptor complex is a dodecamer of two head-to-head hexamers of two alpha, two beta, and two ligand subunits. Interacts with TMEM102; this interaction occurs preferentially in the absence of CSF2. Interacts with FCER1G; this interaction is direct. Interacts with LYN. Interacts with JAK1. Post-translationally, may be phosphorylated by LYN.

The protein localises to the membrane. Cell surface receptor that plays a role in immune response and controls the production and differentiation of hematopoietic progenitor cells into lineage-restricted cells. Acts by forming an heterodimeric receptor through interaction with different partners such as IL3RA, IL5RA or CSF2RA. In turn, participates in various signaling pathways including interleukin-3, interleukin-5 and granulocyte-macrophage colony-stimulating factor/CSF2 pathways. In unstimulated conditions, interacts constitutively with JAK1 and ligand binding leads to JAK1 stimulation and subsequent activation of the JAK-STAT pathway. In Homo sapiens (Human), this protein is Cytokine receptor common subunit beta (CSF2RB).